Consider the following 210-residue polypeptide: Na(+)-translocating NADH-quinone reductase subunit D (210 aa).

5 consecutive transmembrane segments (helical) span residues 42-62, 72-92, 103-123, 131-151, and 178-198; these read FVMT…VSVI, IIVQ…ILKA, VFVG…AFAM, LIDG…VGFF, and NGLM…IWAI.

It belongs to the NqrDE/RnfAE family. In terms of assembly, composed of six subunits; NqrA, NqrB, NqrC, NqrD, NqrE and NqrF.

It is found in the cell inner membrane. It catalyses the reaction a ubiquinone + n Na(+)(in) + NADH + H(+) = a ubiquinol + n Na(+)(out) + NAD(+). Functionally, NQR complex catalyzes the reduction of ubiquinone-1 to ubiquinol by two successive reactions, coupled with the transport of Na(+) ions from the cytoplasm to the periplasm. NqrA to NqrE are probably involved in the second step, the conversion of ubisemiquinone to ubiquinol. The sequence is that of Na(+)-translocating NADH-quinone reductase subunit D from Vibrio vulnificus (strain YJ016).